The following is a 127-amino-acid chain: uncharacterized protein (127 aa).

Threonine 30 is modified (phosphothreonine). The tract at residues 51–75 (APTYEQVLYPPASQKKTSNSTSEES) is disordered. Serine 63 carries the phosphoserine modification.

This is an uncharacterized protein from Mus musculus (Mouse).